Reading from the N-terminus, the 90-residue chain is Small ribosomal subunit protein bS16 (90 aa).

The protein belongs to the bacterial ribosomal protein bS16 family.

The sequence is that of Small ribosomal subunit protein bS16 from Listeria innocua serovar 6a (strain ATCC BAA-680 / CLIP 11262).